Here is a 439-residue protein sequence, read N- to C-terminus: ATP-dependent RNA helicase RhlB (439 aa).

A Q motif motif is present at residues 9 to 37 (QKFADLPLCDEVKQALNENGFEHCTPIQA). Residues 40 to 219 (LPVLLEKKDI…YDHMNDPVKV (180 aa)) form the Helicase ATP-binding domain. Residue 53–60 (AQTGTGKT) participates in ATP binding. The DEAD box motif lies at 165–168 (DEAD). In terms of domain architecture, Helicase C-terminal spans 243–390 (KLKLLHSLIE…VTSYDRDALI (148 aa)). A disordered region spans residues 394 to 439 (PPVKIHRKPHAGGRNLRDRNGSPRPSGSHRSGSGRPPRHDRTRRHS). Over residues 415–428 (SPRPSGSHRSGSGR) the composition is skewed to low complexity. Positions 429-439 (PPRHDRTRRHS) are enriched in basic residues.

It belongs to the DEAD box helicase family. RhlB subfamily. Component of the RNA degradosome, which is a multiprotein complex involved in RNA processing and mRNA degradation.

Its subcellular location is the cytoplasm. It carries out the reaction ATP + H2O = ADP + phosphate + H(+). Functionally, DEAD-box RNA helicase involved in RNA degradation. Has RNA-dependent ATPase activity and unwinds double-stranded RNA. This Shewanella amazonensis (strain ATCC BAA-1098 / SB2B) protein is ATP-dependent RNA helicase RhlB.